The sequence spans 430 residues: 3-phosphoshikimate 1-carboxyvinyltransferase (430 aa).

3 residues coordinate 3-phosphoshikimate: Lys33, Ser34, and Arg38. Lys33 contacts phosphoenolpyruvate. Phosphoenolpyruvate contacts are provided by Gly101 and Arg129. The 3-phosphoshikimate site is built by Ser172, Ser173, Gln174, Ser201, Glu319, and His346. Residue Gln174 participates in phosphoenolpyruvate binding. Catalysis depends on Glu319, which acts as the Proton acceptor. Residues Arg350, Arg391, and Lys416 each contribute to the phosphoenolpyruvate site.

Belongs to the EPSP synthase family. In terms of assembly, monomer.

It localises to the cytoplasm. The catalysed reaction is 3-phosphoshikimate + phosphoenolpyruvate = 5-O-(1-carboxyvinyl)-3-phosphoshikimate + phosphate. The protein operates within metabolic intermediate biosynthesis; chorismate biosynthesis; chorismate from D-erythrose 4-phosphate and phosphoenolpyruvate: step 6/7. Catalyzes the transfer of the enolpyruvyl moiety of phosphoenolpyruvate (PEP) to the 5-hydroxyl of shikimate-3-phosphate (S3P) to produce enolpyruvyl shikimate-3-phosphate and inorganic phosphate. The protein is 3-phosphoshikimate 1-carboxyvinyltransferase of Corynebacterium glutamicum (strain R).